Here is a 367-residue protein sequence, read N- to C-terminus: Chorismate synthase (367 aa).

R48 contributes to the NADP(+) binding site. Residues 125–127 (RAS), G290, 305–309 (KPTSS), and R333 contribute to the FMN site.

It belongs to the chorismate synthase family. Homotetramer. The cofactor is FMNH2.

The catalysed reaction is 5-O-(1-carboxyvinyl)-3-phosphoshikimate = chorismate + phosphate. The protein operates within metabolic intermediate biosynthesis; chorismate biosynthesis; chorismate from D-erythrose 4-phosphate and phosphoenolpyruvate: step 7/7. Catalyzes the anti-1,4-elimination of the C-3 phosphate and the C-6 proR hydrogen from 5-enolpyruvylshikimate-3-phosphate (EPSP) to yield chorismate, which is the branch point compound that serves as the starting substrate for the three terminal pathways of aromatic amino acid biosynthesis. This reaction introduces a second double bond into the aromatic ring system. The polypeptide is Chorismate synthase (Protochlamydia amoebophila (strain UWE25)).